We begin with the raw amino-acid sequence, 229 residues long: Flagellar L-ring protein (229 aa).

Positions 1–25 are cleaved as a signal peptide; the sequence is MKQVRLLPSAPVRAVCALAVAALAG. A lipid anchor (N-palmitoyl cysteine) is attached at C26. A lipid anchor (S-diacylglycerol cysteine) is attached at C26.

It belongs to the FlgH family. As to quaternary structure, the basal body constitutes a major portion of the flagellar organelle and consists of four rings (L,P,S, and M) mounted on a central rod.

The protein localises to the cell outer membrane. The protein resides in the bacterial flagellum basal body. Its function is as follows. Assembles around the rod to form the L-ring and probably protects the motor/basal body from shearing forces during rotation. The polypeptide is Flagellar L-ring protein (Burkholderia ambifaria (strain MC40-6)).